We begin with the raw amino-acid sequence, 420 residues long: Alpha-ketoglutarate-dependent xanthine dioxygenase xan-1 (420 aa).

Fe cation is bound by residues H157 and D159. Residues T206 and W336 each coordinate 2-oxoglutarate. Residue H351 participates in Fe cation binding. R366 contacts 2-oxoglutarate. R366 is a substrate binding site.

The protein belongs to the TfdA dioxygenase family. Requires Fe(2+) as cofactor.

It localises to the cytoplasm. The protein localises to the cytosol. It carries out the reaction xanthine + 2-oxoglutarate + O2 = urate + succinate + CO2. Functionally, alpha-ketoglutarate-dependent xanthine dioxygenase is a non-heme mononuclear Fe(2+) enzyme that decarboxylates alpha-ketoglutarate to succinate and CO(2) while hydroxylating xanthine to generate uric acid. Allows xanthine utilization as a nitrogen source. In Neurospora crassa (strain ATCC 24698 / 74-OR23-1A / CBS 708.71 / DSM 1257 / FGSC 987), this protein is Alpha-ketoglutarate-dependent xanthine dioxygenase xan-1.